A 406-amino-acid chain; its full sequence is Glucose-6-phosphate isomerase (406 aa).

Residue Glu259 is the Proton donor of the active site. Active-site residues include His284 and Lys397.

It belongs to the GPI family.

It is found in the cytoplasm. It catalyses the reaction alpha-D-glucose 6-phosphate = beta-D-fructose 6-phosphate. Its pathway is carbohydrate biosynthesis; gluconeogenesis. It participates in carbohydrate degradation; glycolysis; D-glyceraldehyde 3-phosphate and glycerone phosphate from D-glucose: step 2/4. Functionally, catalyzes the reversible isomerization of glucose-6-phosphate to fructose-6-phosphate. The protein is Glucose-6-phosphate isomerase of Campylobacter jejuni subsp. jejuni serotype O:2 (strain ATCC 700819 / NCTC 11168).